The sequence spans 198 residues: MQSFADAKEFFQYSAGQWQSRRVTHHLPFRRAESGGSNIQVETLEKDDPRIIEICQMHDMDASLSVGGSYVTWAGTMQWDKDDENHEGSTVFALIPDADNPRQGKLLRERGYAEIVPVAGEYHLDHEDGLVLTTEYETMTIYERFWFANPDLRLRTSTVKRFGGFNTTTFCMEERIQTSPVTATAAAETNPLYAISGW.

It belongs to the CpcS/CpeS biliprotein lyase family. As to quaternary structure, forms a heterodimer with CpcU.

Functionally, attaches a phycocyanobilin (PCB) chromophore to 'Cys-82' of the C-phycocyanain beta subunit (PhcB) and the unique PCB that is attached to allophycocyanin alpha and beta subunits (ApcA and ApcB). In vitro, and probably also in vivo, chromophorylates ApcD and ApcF. In Picosynechococcus sp. (strain ATCC 27264 / PCC 7002 / PR-6) (Agmenellum quadruplicatum), this protein is Phycocyanobilin lyase subunit CpcS (cpcS).